The sequence spans 149 residues: Protegrin-3 (149 aa).

Residues 1-29 (METQRASLCLGRWSLWLLLLALVVPSASA) form the signal peptide. The propeptide occupies 30 to 130 (QALSYREAVL…DITCNEVQGV (101 aa)). The segment at 61–80 (DQPPKADEDPGTPKPVSFTV) is disordered. 4 disulfide bridges follow: Cys-85–Cys-96, Cys-107–Cys-124, Cys-136–Cys-145, and Cys-138–Cys-143. At Arg-148 the chain carries Arginine amide.

It belongs to the cathelicidin family.

The protein localises to the secreted. Functionally, microbicidal activity. Active against E.coli, Listeria monocytogenes and C.albicans, in vitro. This chain is Protegrin-3 (NPG3), found in Sus scrofa (Pig).